The chain runs to 348 residues: MNILRSVVSRGRKGLKQEKVNRSFAYLDMVYITSKVIAMSTPAAGIHKLYRNDELDVFKYLTTQLKDNWILLNLCAEETVYHLELFKPNVINYGFQDHNPPPLLFLWAIVMNMDALFQTQPLLTLVVHCKAGKGRTGTVICSYLVAFGGLTAKQSLELYTEKRMVRGHGLTISSQIRYVYYIEILKQFPNYLKAVEFNTGTTFFKSFKCLNIKKNSSLILSLHAFSKGRNINPVALWKSSDISSHNVSIKEGKRIWGIQCNLETSEKDLLLRVERKGQFYFPSSVQCWFHTHFQPMLVEYTNGINFQQGINSFLQGQQSISFSWSEMDNSRRSDPFFEQLTIVYENVF.

One can recognise a Phosphatase tensin-type domain in the interval 18–189 (EKVNRSFAYL…YYIEILKQFP (172 aa)). C129 acts as the Phosphocysteine intermediate in catalysis.

It localises to the cytoplasmic vesicle. It carries out the reaction a 1,2-diacyl-sn-glycero-3-phospho-(1D-myo-inositol-3,4,5-trisphosphate) + H2O = a 1,2-diacyl-sn-glycero-3-phospho-(1D-myo-inositol-4,5-bisphosphate) + phosphate. The catalysed reaction is 1,2-dioctanoyl-sn-glycero-3-phospho-(1D-myo-inositol-3,4,5-trisphosphate) + H2O = 1,2-dioctanoyl-sn-glycero-3-phospho-(1D-myo-inositol-4,5-bisphosphate) + phosphate. It catalyses the reaction 1,2-dihexadecanoyl-sn-glycero-3-phospho-(1D-myo-inositol-3,4,5-trisphosphate) + H2O = 1,2-dihexadecanoyl-sn-glycero-3-phospho-(1D-myo-inositol-4,5-bisphosphate) + phosphate. In terms of biological role, acts as a phosphoinositide 3-phosphatase and regulates PtdIns(3,4,5)P3 levels. The protein is Phosphatidylinositol 3,4,5-trisphosphate 3-phosphatase ptn1 (ptn1) of Schizosaccharomyces pombe (strain 972 / ATCC 24843) (Fission yeast).